The sequence spans 524 residues: Ribonuclease Y (524 aa).

A helical membrane pass occupies residues 2-22 (GIVINLFLIIAASIVFFVVGF). A KH domain is found at 214 to 299 (ALSVVHIQSD…KAYQDAKKEI (86 aa)). An HD domain is found at 340-432 (LLQHSREVAM…VDAANIVSLS (93 aa)).

The protein belongs to the RNase Y family.

It is found in the cell membrane. In terms of biological role, endoribonuclease that initiates mRNA decay. This is Ribonuclease Y from Chlorobaculum tepidum (strain ATCC 49652 / DSM 12025 / NBRC 103806 / TLS) (Chlorobium tepidum).